The chain runs to 346 residues: Phosphoribosylformylglycinamidine cyclo-ligase (346 aa).

The protein belongs to the AIR synthase family.

It is found in the cytoplasm. The catalysed reaction is 2-formamido-N(1)-(5-O-phospho-beta-D-ribosyl)acetamidine + ATP = 5-amino-1-(5-phospho-beta-D-ribosyl)imidazole + ADP + phosphate + H(+). Its pathway is purine metabolism; IMP biosynthesis via de novo pathway; 5-amino-1-(5-phospho-D-ribosyl)imidazole from N(2)-formyl-N(1)-(5-phospho-D-ribosyl)glycinamide: step 2/2. This is Phosphoribosylformylglycinamidine cyclo-ligase from Vibrio campbellii (strain ATCC BAA-1116).